Here is a 433-residue protein sequence, read N- to C-terminus: Phosphomethylpyrimidine synthase (433 aa).

Substrate is bound by residues N66, M94, Y123, H162, 184-186 (SRG), 225-228 (DALR), and E264. H268 is a Zn(2+) binding site. Y291 contacts substrate. Residue H332 coordinates Zn(2+). Positions 408, 411, and 415 each coordinate [4Fe-4S] cluster.

Belongs to the ThiC family. The cofactor is [4Fe-4S] cluster.

The catalysed reaction is 5-amino-1-(5-phospho-beta-D-ribosyl)imidazole + S-adenosyl-L-methionine = 4-amino-2-methyl-5-(phosphooxymethyl)pyrimidine + CO + 5'-deoxyadenosine + formate + L-methionine + 3 H(+). It functions in the pathway cofactor biosynthesis; thiamine diphosphate biosynthesis. In terms of biological role, catalyzes the synthesis of the hydroxymethylpyrimidine phosphate (HMP-P) moiety of thiamine from aminoimidazole ribotide (AIR) in a radical S-adenosyl-L-methionine (SAM)-dependent reaction. The polypeptide is Phosphomethylpyrimidine synthase (Saccharolobus islandicus (strain M.14.25 / Kamchatka #1) (Sulfolobus islandicus)).